The primary structure comprises 38 residues: Large ribosomal subunit protein bL36 (38 aa).

The protein belongs to the bacterial ribosomal protein bL36 family.

The sequence is that of Large ribosomal subunit protein bL36 from Amoebophilus asiaticus (strain 5a2).